A 462-amino-acid polypeptide reads, in one-letter code: tRNA-2-methylthio-N(6)-dimethylallyladenosine synthase (462 aa).

Residues 2 to 117 enclose the MTTase N-terminal domain; sequence KRYFIHTFGC…LPDIIGRVSA (116 aa). Residues C11, C47, C80, C157, C161, and C164 each contribute to the [4Fe-4S] cluster site. Residues 143–372 enclose the Radical SAM core domain; it reads SRGKVTEFVT…QKLQRRISGE (230 aa). One can recognise a TRAM domain in the interval 375-437; the sequence is AALVGSEVEV…PNQLAGKQVA (63 aa).

This sequence belongs to the methylthiotransferase family. MiaB subfamily. As to quaternary structure, monomer. [4Fe-4S] cluster serves as cofactor.

It localises to the cytoplasm. The catalysed reaction is N(6)-dimethylallyladenosine(37) in tRNA + (sulfur carrier)-SH + AH2 + 2 S-adenosyl-L-methionine = 2-methylsulfanyl-N(6)-dimethylallyladenosine(37) in tRNA + (sulfur carrier)-H + 5'-deoxyadenosine + L-methionine + A + S-adenosyl-L-homocysteine + 2 H(+). In terms of biological role, catalyzes the methylthiolation of N6-(dimethylallyl)adenosine (i(6)A), leading to the formation of 2-methylthio-N6-(dimethylallyl)adenosine (ms(2)i(6)A) at position 37 in tRNAs that read codons beginning with uridine. In Myxococcus xanthus (strain DK1622), this protein is tRNA-2-methylthio-N(6)-dimethylallyladenosine synthase.